The following is a 437-amino-acid chain: Probable peptidoglycan-N-acetylglucosamine deacetylase ARB_03699 (437 aa).

Residues 1-20 form the signal peptide; it reads MLMRLYTFFAAALLACCAAA. A disordered region spans residues 47–132; sequence STRAATTTTT…STSAAAPSTP (86 aa). N99 is a glycosylation site (N-linked (GlcNAc...) asparagine). The region spanning 149-334 is the NodB homology domain; that stretch reads GTVAITFDDG…EVKRRGLKAV (186 aa). The Proton acceptor role is filled by D156. D157, H209, and H213 together coordinate Zn(2+). Y251 serves as a coordination point for substrate. H308 (proton donor) is an active-site residue. The segment covering 350–370 has biased composition (low complexity); it reads TTPVQVPTGTSTTSPTATPTS. The interval 350–384 is disordered; sequence TTPVQVPTGTSTTSPTATPTSPGTPPPAPTQPGVA. The LysM domain occupies 389–435; that stretch reads KWHTVVSGDTCYDIAAANGISLDNLYKWNPAVGTSCASLWLGYAVCV.

It depends on Zn(2+) as a cofactor. Requires Co(2+) as cofactor.

Its subcellular location is the secreted. The catalysed reaction is peptidoglycan-N-acetyl-D-glucosamine + H2O = peptidoglycan-D-glucosamine + acetate.. Its function is as follows. Catalyzes the deacetylation of N-acetylglucosamine (GlcNAc) residues in peptidoglycan. The protein is Probable peptidoglycan-N-acetylglucosamine deacetylase ARB_03699 of Arthroderma benhamiae (strain ATCC MYA-4681 / CBS 112371) (Trichophyton mentagrophytes).